Reading from the N-terminus, the 295-residue chain is ESX-3 secretion-associated protein EspG3 (295 aa).

It belongs to the EspG family. Interacts specifically with ESX-3-dependent PE/PPE proteins.

It localises to the cytoplasm. Specific chaperone for cognate PE/PPE proteins. Plays an important role in preventing aggregation of PE/PPE dimers. This Mycobacterium tuberculosis (strain CDC 1551 / Oshkosh) protein is ESX-3 secretion-associated protein EspG3.